A 134-amino-acid chain; its full sequence is Small ribosomal subunit protein uS8 (134 aa).

This sequence belongs to the universal ribosomal protein uS8 family. In terms of assembly, part of the 30S ribosomal subunit. Contacts proteins S5 and S12.

In terms of biological role, one of the primary rRNA binding proteins, it binds directly to 16S rRNA central domain where it helps coordinate assembly of the platform of the 30S subunit. This is Small ribosomal subunit protein uS8 from Thermotoga neapolitana (strain ATCC 49049 / DSM 4359 / NBRC 107923 / NS-E).